Reading from the N-terminus, the 90-residue chain is uncharacterized protein (90 aa).

The stretch at 36-82 forms a coiled coil; it reads DQEYSDAQMQLEDAVNALNKLWLSSNDQQREQLYRMRLQLQSLQNNM.

This is an uncharacterized protein from Bacillus subtilis (strain 168).